Consider the following 120-residue polypeptide: NAD(P)H-quinone oxidoreductase subunit 3, chloroplastic (120 aa).

Transmembrane regions (helical) follow at residues Ile-9–Gly-29, Met-64–Met-84, and Val-88–Ser-108.

This sequence belongs to the complex I subunit 3 family. As to quaternary structure, NDH is composed of at least 16 different subunits, 5 of which are encoded in the nucleus.

It localises to the plastid. Its subcellular location is the chloroplast thylakoid membrane. The enzyme catalyses a plastoquinone + NADH + (n+1) H(+)(in) = a plastoquinol + NAD(+) + n H(+)(out). It carries out the reaction a plastoquinone + NADPH + (n+1) H(+)(in) = a plastoquinol + NADP(+) + n H(+)(out). Its function is as follows. NDH shuttles electrons from NAD(P)H:plastoquinone, via FMN and iron-sulfur (Fe-S) centers, to quinones in the photosynthetic chain and possibly in a chloroplast respiratory chain. The immediate electron acceptor for the enzyme in this species is believed to be plastoquinone. Couples the redox reaction to proton translocation, and thus conserves the redox energy in a proton gradient. This Manihot esculenta (Cassava) protein is NAD(P)H-quinone oxidoreductase subunit 3, chloroplastic.